The sequence spans 489 residues: Glutamyl-tRNA(Gln) amidotransferase subunit A (489 aa).

Active-site charge relay system residues include Lys-78 and Ser-153. The active-site Acyl-ester intermediate is Ser-177.

The protein belongs to the amidase family. GatA subfamily. In terms of assembly, heterotrimer of A, B and C subunits.

The catalysed reaction is L-glutamyl-tRNA(Gln) + L-glutamine + ATP + H2O = L-glutaminyl-tRNA(Gln) + L-glutamate + ADP + phosphate + H(+). Its function is as follows. Allows the formation of correctly charged Gln-tRNA(Gln) through the transamidation of misacylated Glu-tRNA(Gln) in organisms which lack glutaminyl-tRNA synthetase. The reaction takes place in the presence of glutamine and ATP through an activated gamma-phospho-Glu-tRNA(Gln). The chain is Glutamyl-tRNA(Gln) amidotransferase subunit A from Nitratidesulfovibrio vulgaris (strain DP4) (Desulfovibrio vulgaris).